The sequence spans 438 residues: Ubiquitin carboxyl-terminal hydrolase 27 (438 aa).

The USP domain maps to 78-421 (RGLINLGNTC…EGYLLFYHKQ (344 aa)). The Nucleophile role is filled by cysteine 87. Histidine 380 functions as the Proton acceptor in the catalytic mechanism.

This sequence belongs to the peptidase C19 family. As to quaternary structure, interacts with phosphorylated BCL2L11 isoform BIMEL; this interaction leads to BCL2L11 deubiquitination and stabilization.

Its subcellular location is the cytoplasm. The protein localises to the cytosol. It is found in the nucleus. It carries out the reaction Thiol-dependent hydrolysis of ester, thioester, amide, peptide and isopeptide bonds formed by the C-terminal Gly of ubiquitin (a 76-residue protein attached to proteins as an intracellular targeting signal).. Functionally, deubiquitinase involved in innate antiviral immunity by mediating deubiquitination of CGAS and RIGI. Negatively regulates RIGI by mediating 'Lys-63'-linked deubiquitination of RIGI, inhibiting type I interferon signaling. Also regulates 'Lys-63'-linked ubiquitination level of MDA5/IFIH1. Acts as a positive regulator of the cGAS-STING pathway by catalyzing 'Lys-48'-linked deubiquitination of CGAS, thereby promoting its stabilization. Can reduce the levels of BCL2L11/BIM ubiquitination and stabilize BCL2L11 in response to the RAF-MAPK-degradation signal. By acting on BCL2L11 levels, may counteract the anti-apoptotic effects of MAPK activity. This Homo sapiens (Human) protein is Ubiquitin carboxyl-terminal hydrolase 27.